Consider the following 247-residue polypeptide: Isoprenyl transferase (247 aa).

Asp-18 is an active-site residue. Asp-18 serves as a coordination point for Mg(2+). Residues 19–22 (GNGR), Trp-23, Arg-31, His-35, and 63–65 (SSE) contribute to the substrate site. The active-site Proton acceptor is Asn-66. Substrate is bound by residues Trp-67, Arg-69, Arg-186, and 192 to 194 (RLS). Glu-205 lines the Mg(2+) pocket.

Belongs to the UPP synthase family. In terms of assembly, homodimer. Mg(2+) is required as a cofactor.

In terms of biological role, catalyzes the condensation of isopentenyl diphosphate (IPP) with allylic pyrophosphates generating different type of terpenoids. The sequence is that of Isoprenyl transferase from Rhizobium meliloti (strain 1021) (Ensifer meliloti).